The sequence spans 428 residues: Serine--tRNA ligase (428 aa).

231-233 (TAE) is an L-serine binding site. ATP-binding positions include 262-264 (RRE) and valine 278. Glutamate 285 serves as a coordination point for L-serine. Residue 349–352 (EVSS) coordinates ATP. An L-serine-binding site is contributed by serine 384.

This sequence belongs to the class-II aminoacyl-tRNA synthetase family. Type-1 seryl-tRNA synthetase subfamily. In terms of assembly, homodimer. The tRNA molecule binds across the dimer.

Its subcellular location is the cytoplasm. The enzyme catalyses tRNA(Ser) + L-serine + ATP = L-seryl-tRNA(Ser) + AMP + diphosphate + H(+). The catalysed reaction is tRNA(Sec) + L-serine + ATP = L-seryl-tRNA(Sec) + AMP + diphosphate + H(+). The protein operates within aminoacyl-tRNA biosynthesis; selenocysteinyl-tRNA(Sec) biosynthesis; L-seryl-tRNA(Sec) from L-serine and tRNA(Sec): step 1/1. Catalyzes the attachment of serine to tRNA(Ser). Is also able to aminoacylate tRNA(Sec) with serine, to form the misacylated tRNA L-seryl-tRNA(Sec), which will be further converted into selenocysteinyl-tRNA(Sec). This is Serine--tRNA ligase from Chlamydia trachomatis serovar A (strain ATCC VR-571B / DSM 19440 / HAR-13).